An 81-amino-acid chain; its full sequence is RNA-binding protein Hfq (81 aa).

Positions 10 to 69 (DPFLNTLRKEHIPVSIYLVNGIKLQGHIDSFDQYVVLLKNTVTQMVYKHAISTVVPARAV) constitute a Sm domain.

Belongs to the Hfq family. Homohexamer.

Functionally, RNA chaperone that binds small regulatory RNA (sRNAs) and mRNAs to facilitate mRNA translational regulation in response to envelope stress, environmental stress and changes in metabolite concentrations. Also binds with high specificity to tRNAs. In Nitrosospira multiformis (strain ATCC 25196 / NCIMB 11849 / C 71), this protein is RNA-binding protein Hfq.